Here is a 164-residue protein sequence, read N- to C-terminus: Large ribosomal subunit protein bL21 (164 aa).

The interval 105–164 is disordered; that stretch reads KAPTIGPRAKKEKKVEAAPADGEAPAKKAPAKKAAAKKAAPKAAAKKAPAKKAAPKAKSE. Basic residues predominate over residues 133–164; sequence APAKKAAAKKAAPKAAAKKAPAKKAAPKAKSE.

It belongs to the bacterial ribosomal protein bL21 family. As to quaternary structure, part of the 50S ribosomal subunit. Contacts protein L20.

Functionally, this protein binds to 23S rRNA in the presence of protein L20. The sequence is that of Large ribosomal subunit protein bL21 from Afipia carboxidovorans (strain ATCC 49405 / DSM 1227 / KCTC 32145 / OM5) (Oligotropha carboxidovorans).